A 400-amino-acid polypeptide reads, in one-letter code: Acetate kinase (400 aa).

Asn7 is a binding site for Mg(2+). Position 14 (Lys14) interacts with ATP. Arg91 contacts substrate. Catalysis depends on Asp148, which acts as the Proton donor/acceptor. ATP is bound by residues 208–212, 283–285, and 331–335; these read HVGNG, DMR, and GVGEN. Glu385 serves as a coordination point for Mg(2+).

Belongs to the acetokinase family. Homodimer. Mg(2+) serves as cofactor. It depends on Mn(2+) as a cofactor.

The protein localises to the cytoplasm. It catalyses the reaction acetate + ATP = acetyl phosphate + ADP. It functions in the pathway metabolic intermediate biosynthesis; acetyl-CoA biosynthesis; acetyl-CoA from acetate: step 1/2. Functionally, catalyzes the formation of acetyl phosphate from acetate and ATP. Can also catalyze the reverse reaction. The sequence is that of Acetate kinase from Parabacteroides distasonis (strain ATCC 8503 / DSM 20701 / CIP 104284 / JCM 5825 / NCTC 11152).